Consider the following 365-residue polypeptide: Flavone synthase (365 aa).

Histidine 76, histidine 218, aspartate 220, and histidine 276 together coordinate Fe cation. Positions 194-295 (MEQKVLINYY…RLSIATFQNP (102 aa)) constitute a Fe2OG dioxygenase domain. Positions 345-365 (RLQDEKAKLEMKSKSADENLA) are disordered.

The protein belongs to the iron/ascorbate-dependent oxidoreductase family. The cofactor is Fe cation. It depends on L-ascorbate as a cofactor.

The protein resides in the cytoplasm. The catalysed reaction is a flavanone + 2-oxoglutarate + O2 = a flavone + succinate + CO2 + H2O. It participates in secondary metabolite biosynthesis; flavonoid biosynthesis. Involved in the conversion of naringenin to apigenin. Acts via a direct 2,3-desaturation of flavanones instead of a sequential hydroxylation/dehydratation mechanism. The chain is Flavone synthase (FNSI) from Petroselinum crispum (Parsley).